A 328-amino-acid chain; its full sequence is ATP-dependent 6-phosphofructokinase (328 aa).

Position 11 (glycine 11) interacts with ATP. Position 21-25 (21-25) interacts with ADP; that stretch reads RAAVR. ATP-binding positions include 72–73 and 102–105; these read RS and GNGT. Asparagine 103 provides a ligand contact to Mg(2+). 126–128 contacts substrate; that stretch reads TID. Aspartate 128 (proton acceptor) is an active-site residue. Residue arginine 155 coordinates ADP. Residues arginine 163 and 170 to 172 each bind substrate; that span reads MGR. Residues 186–188 and 214–216 contribute to the ADP site; these read GAE and KAS. Residues glutamate 223, arginine 247, and 253 to 256 contribute to the substrate site; that span reads HVQR.

It belongs to the phosphofructokinase type A (PFKA) family. ATP-dependent PFK group I subfamily. Prokaryotic clade 'B1' sub-subfamily. As to quaternary structure, homotetramer. The cofactor is Mg(2+).

It localises to the cytoplasm. It catalyses the reaction beta-D-fructose 6-phosphate + ATP = beta-D-fructose 1,6-bisphosphate + ADP + H(+). It functions in the pathway carbohydrate degradation; glycolysis; D-glyceraldehyde 3-phosphate and glycerone phosphate from D-glucose: step 3/4. Its activity is regulated as follows. Allosterically activated by ADP and other diphosphonucleosides, and allosterically inhibited by phosphoenolpyruvate. Functionally, catalyzes the phosphorylation of D-fructose 6-phosphate to fructose 1,6-bisphosphate by ATP, the first committing step of glycolysis. This Cytophaga hutchinsonii (strain ATCC 33406 / DSM 1761 / CIP 103989 / NBRC 15051 / NCIMB 9469 / D465) protein is ATP-dependent 6-phosphofructokinase.